The primary structure comprises 310 residues: p-hydroxybenzoic acid efflux pump subunit AaeA (310 aa).

The helical transmembrane segment at 12 to 32 (AITVVLVVLAFIAIFRAWSFY) threads the bilayer.

Belongs to the membrane fusion protein (MFP) (TC 8.A.1) family.

It is found in the cell inner membrane. In terms of biological role, forms an efflux pump with AaeB. In Cronobacter sakazakii (strain ATCC BAA-894) (Enterobacter sakazakii), this protein is p-hydroxybenzoic acid efflux pump subunit AaeA.